The sequence spans 29 residues: Cytochrome b6-f complex subunit 8 (29 aa).

Residues 3–23 traverse the membrane as a helical segment; it reads ILSLGWAALMTMFTFSLALTV.

This sequence belongs to the PetN family. In terms of assembly, the 4 large subunits of the cytochrome b6-f complex are cytochrome b6, subunit IV (17 kDa polypeptide, PetD), cytochrome f and the Rieske protein, while the 4 small subunits are PetG, PetL, PetM and PetN. The complex functions as a dimer.

Its subcellular location is the plastid. The protein resides in the chloroplast thylakoid membrane. Component of the cytochrome b6-f complex, which mediates electron transfer between photosystem II (PSII) and photosystem I (PSI), cyclic electron flow around PSI, and state transitions. The protein is Cytochrome b6-f complex subunit 8 of Phaeodactylum tricornutum (strain CCAP 1055/1).